A 380-amino-acid polypeptide reads, in one-letter code: Carbonic anhydrase 2 (380 aa).

An N-terminal signal peptide occupies residues 1–20 (MARTGALLLAALALAGCAQA). The Alpha-carbonic anhydrase domain occupies 38-322 (DHWDHSLNGE…HHHRRLLHNH (285 aa)). 3 disulfides stabilise this stretch: cysteine 61-cysteine 264, cysteine 194-cysteine 198, and cysteine 296-cysteine 354. An N-linked (GlcNAc...) asparagine glycan is attached at asparagine 101. The active-site Proton acceptor is histidine 112. Residue asparagine 135 is glycosylated (N-linked (GlcNAc...) asparagine). Residues histidine 163, histidine 165, and histidine 182 each coordinate Zn(2+). Residue 260–261 (TT) coordinates substrate. The N-linked (GlcNAc...) asparagine glycan is linked to asparagine 297.

Belongs to the alpha-carbonic anhydrase family. Tetramer of two large and two small subunits linked by two disulfide bonds. It depends on Zn(2+) as a cofactor.

Its subcellular location is the periplasm. It catalyses the reaction hydrogencarbonate + H(+) = CO2 + H2O. Reversible hydration of carbon dioxide. The chain is Carbonic anhydrase 2 (CAH2) from Chlamydomonas reinhardtii (Chlamydomonas smithii).